Reading from the N-terminus, the 227-residue chain is Isoprenyl transferase (227 aa).

Asp-13 is a catalytic residue. Asp-13 contributes to the Mg(2+) binding site. Substrate contacts are provided by residues 14–17 (GNGR), Trp-18, Arg-26, His-30, and 58–60 (STE). Catalysis depends on Asn-61, which acts as the Proton acceptor. Substrate contacts are provided by residues Trp-62, Arg-64, Arg-175, and 181-183 (RLS). Position 194 (Glu-194) interacts with Mg(2+).

Belongs to the UPP synthase family. In terms of assembly, homodimer. Requires Mg(2+) as cofactor.

Functionally, catalyzes the condensation of isopentenyl diphosphate (IPP) with allylic pyrophosphates generating different type of terpenoids. In Treponema denticola (strain ATCC 35405 / DSM 14222 / CIP 103919 / JCM 8153 / KCTC 15104), this protein is Isoprenyl transferase.